A 416-amino-acid polypeptide reads, in one-letter code: Tyrosine permease (416 aa).

Transmembrane regions (helical) follow at residues 13-33 (GTML…PIAM), 34-54 (AGIW…MMLL), 86-106 (VVVG…YISG), 127-147 (LSVI…SLLV), 153-173 (VLII…IWHV), 192-212 (LPYI…HGNV), 231-251 (IFIG…VTMG), 260-280 (PIIA…GLFT), 286-306 (LILT…ATLG), 337-357 (VVCF…GLAF), and 389-409 (ILNL…LDVF).

The protein belongs to the amino acid/polyamine transporter 2 family. Mtr/TnaB/TyrP permease subfamily.

It localises to the cell inner membrane. The protein is Tyrosine permease (tutB) of Enterobacter agglomerans (Erwinia herbicola).